A 132-amino-acid chain; its full sequence is Acyl-CoA thioester hydrolase YciA (132 aa).

One can recognise a HotDog ACOT-type domain in the interval 8–123 (PQGDLVLRTL…LFKYVAVDPE (116 aa)).

Belongs to the acyl coenzyme A hydrolase family.

Catalyzes the hydrolysis of the thioester bond in palmitoyl-CoA and malonyl-CoA. The polypeptide is Acyl-CoA thioester hydrolase YciA (yciA) (Escherichia coli O6:H1 (strain CFT073 / ATCC 700928 / UPEC)).